The sequence spans 214 residues: Thiamine-phosphate synthase (214 aa).

4-amino-2-methyl-5-(diphosphooxymethyl)pyrimidine is bound by residues 37 to 41 (QYREK) and Asn-73. Residues Asp-74 and Asp-93 each contribute to the Mg(2+) site. A 4-amino-2-methyl-5-(diphosphooxymethyl)pyrimidine-binding site is contributed by Ser-112. 139–141 (TIS) is a 2-[(2R,5Z)-2-carboxy-4-methylthiazol-5(2H)-ylidene]ethyl phosphate binding site. 4-amino-2-methyl-5-(diphosphooxymethyl)pyrimidine is bound at residue Lys-142. 2-[(2R,5Z)-2-carboxy-4-methylthiazol-5(2H)-ylidene]ethyl phosphate is bound by residues Gly-171 and 191–192 (IS).

The protein belongs to the thiamine-phosphate synthase family. It depends on Mg(2+) as a cofactor.

The catalysed reaction is 2-[(2R,5Z)-2-carboxy-4-methylthiazol-5(2H)-ylidene]ethyl phosphate + 4-amino-2-methyl-5-(diphosphooxymethyl)pyrimidine + 2 H(+) = thiamine phosphate + CO2 + diphosphate. The enzyme catalyses 2-(2-carboxy-4-methylthiazol-5-yl)ethyl phosphate + 4-amino-2-methyl-5-(diphosphooxymethyl)pyrimidine + 2 H(+) = thiamine phosphate + CO2 + diphosphate. It catalyses the reaction 4-methyl-5-(2-phosphooxyethyl)-thiazole + 4-amino-2-methyl-5-(diphosphooxymethyl)pyrimidine + H(+) = thiamine phosphate + diphosphate. Its pathway is cofactor biosynthesis; thiamine diphosphate biosynthesis; thiamine phosphate from 4-amino-2-methyl-5-diphosphomethylpyrimidine and 4-methyl-5-(2-phosphoethyl)-thiazole: step 1/1. In terms of biological role, condenses 4-methyl-5-(beta-hydroxyethyl)thiazole monophosphate (THZ-P) and 2-methyl-4-amino-5-hydroxymethyl pyrimidine pyrophosphate (HMP-PP) to form thiamine monophosphate (TMP). This chain is Thiamine-phosphate synthase, found in Listeria monocytogenes serotype 4b (strain F2365).